Consider the following 148-residue polypeptide: Nodulation protein NolJ (148 aa).

Positions 66-78 (ADEAMEETEEDAD) are enriched in acidic residues. 2 disordered regions span residues 66–93 (ADEAMEETEEDADALGGPRQEVRAVSDG) and 124–148 (AAKGAGAAVPGPNRRTGSGERRGYG). Positions 124–136 (AAKGAGAAVPGPN) are enriched in low complexity.

In terms of biological role, involved in efficiency of soybean nodulation and in nodulation delay. The protein is Nodulation protein NolJ (nolJ) of Rhizobium fredii (Sinorhizobium fredii).